The sequence spans 674 residues: RNA polymerase sigma factor RpoD (674 aa).

The interval 214–252 (AEGAAPAARRPASDEPEYDADGNPISRIDEEEDDDDSSN) is disordered. A sigma-70 factor domain-2 region spans residues 440–510 (MVEANLRLVI…TRSIADQART (71 aa)). The Interaction with polymerase core subunit RpoC signature appears at 464-467 (DLIQ). The sigma-70 factor domain-3 stretch occupies residues 519-595 (ETINKLVRTG…DKNAILPLDS (77 aa)). The interval 608 to 661 (VLASLTPREERVLRMRFGIGMNTDHTLEEVGQQFSVTRERIRQIEAKALRKLKH) is sigma-70 factor domain-4. Residues 634–653 (LEEVGQQFSVTRERIRQIEA) constitute a DNA-binding region (H-T-H motif).

Belongs to the sigma-70 factor family. RpoD/SigA subfamily. As to quaternary structure, interacts transiently with the RNA polymerase catalytic core.

It localises to the cytoplasm. Sigma factors are initiation factors that promote the attachment of RNA polymerase to specific initiation sites and are then released. This sigma factor is the primary sigma factor during exponential growth. The chain is RNA polymerase sigma factor RpoD from Rhodobacter capsulatus (strain ATCC BAA-309 / NBRC 16581 / SB1003).